The sequence spans 289 residues: Probable endonuclease 4 (289 aa).

Zn(2+) contacts are provided by histidine 76, histidine 116, glutamate 152, aspartate 186, histidine 189, histidine 220, aspartate 233, histidine 235, and glutamate 265.

It belongs to the AP endonuclease 2 family. The cofactor is Zn(2+).

It carries out the reaction Endonucleolytic cleavage to 5'-phosphooligonucleotide end-products.. Its function is as follows. Endonuclease IV plays a role in DNA repair. It cleaves phosphodiester bonds at apurinic or apyrimidinic (AP) sites, generating a 3'-hydroxyl group and a 5'-terminal sugar phosphate. The protein is Probable endonuclease 4 of Malacoplasma penetrans (strain HF-2) (Mycoplasma penetrans).